Here is a 913-residue protein sequence, read N- to C-terminus: MAALFLRGFVQIGNCKTGISKSKEAFIEAVERKKKDRLVLYFKSGKYSTFRLSDNIQNVVLKSYRGNQNHLHLTLQNNNGLFIEGLSSTDAEQLKIFLDRVHQNEVQPPVRPGKGGSVFSSTTQKEINKTSFHKVDEKSSSKSFEIAKGSGTGVLQRMPLLTSKLTLTCGELSENQHKKRKRMLSSSSEMNEEFLKENNSVEYKKSKADCSRCVSYNREKQLKLKELEENKKLECESSCIMNATGNPYLDDIGLLQALTEKMVLVFLLQQGYSDGYTKWDKLKLFFELFPEKICHGLPNLGNTCYMNAVLQSLLSIPSFADDLLNQSFPWGKIPLNALTMCLARLLFFKDTYNIEIKEMLLLNLKKAISAAAEIFHGNAQNDAHEFLAHCLDQLKDNMEKLNTIWKPKSEFGEDNFPKQVFADDPDTSGFSCPVITNFELELLHSIACKACGQVILKTELNNYLSINLPQRIKAHPSSIQSTFDLFFGAEELEYKCAKCEHKTSVGVHSFSRLPRILIVHLKRYSLNEFCALKKNDQEVIISKYLKVSSHCNEGTRPPLPLSEDGEITDFQLLKVIRKMTSGNISVSWPATKESKDILAPHIGSDKESEQKKGQTVFKGASRRQQQKYLGKNSKPNELESVYSGDRAFIEKEPLAHLMTYLEDTSLCQFHKAGGKPASSPGTPLSKVDFQTVPENPKRKKYVKTSKFVAFDRIINPTKDLYEDKNIRIPERFQKVSEQTQQCDGMRICEQAPQQALPQSFPKPGTQGHTKNLLRPTKLNLQKSNRNSLLALGSNKNPRNKDILDKIKSKAKETKRNDDKGDHTYRLISVVSHLGKTLKSGHYICDAYDFEKQIWFTYDDMRVLGIQEAQMQEDRRCTGYIFFYMHNEIFEEMLKREENAQLNSKEVEETLQKE.

In terms of domain architecture, USP spans 295-886; sequence HGLPNLGNTC…TGYIFFYMHN (592 aa). Cys304 serves as the catalytic Nucleophile. Residues 601-612 show a composition bias toward basic and acidic residues; that stretch reads HIGSDKESEQKK. Disordered regions lie at residues 601–636 and 753–772; these read HIGS…SKPN and QQAL…TKNL. The active-site Proton acceptor is the His841.

The protein belongs to the peptidase C19 family. In terms of assembly, interacts with RING1. In terms of tissue distribution, expressed in testis.

It localises to the nucleus. The protein resides in the cytoplasm. It is found in the cytoskeleton. The protein localises to the flagellum axoneme. It catalyses the reaction Thiol-dependent hydrolysis of ester, thioester, amide, peptide and isopeptide bonds formed by the C-terminal Gly of ubiquitin (a 76-residue protein attached to proteins as an intracellular targeting signal).. Its function is as follows. Deubiquitinase regulating several biological processes through the deubiquitination of components of these processes. Involved in somatic cell reprogramming through the 'Lys-48'-linked deubiquitination and stabilization of CBX4 and CBX6, two components of the polycomb-repressive complex 1 (PRC1). Also deubiquitinates and probably stabilizes the androgen receptor (AR), regulating the androgen receptor signaling pathway. May play a role in spermatogenesis. The polypeptide is Ubiquitin carboxyl-terminal hydrolase 26 (Homo sapiens (Human)).